The sequence spans 410 residues: Iron-sulfur cluster assembly SufBD family protein MTH_1150 (410 aa).

The protein belongs to the iron-sulfur cluster assembly SufBD family.

This is Iron-sulfur cluster assembly SufBD family protein MTH_1150 from Methanothermobacter thermautotrophicus (strain ATCC 29096 / DSM 1053 / JCM 10044 / NBRC 100330 / Delta H) (Methanobacterium thermoautotrophicum).